The sequence spans 309 residues: Porphobilinogen deaminase (309 aa).

S-(dipyrrolylmethanemethyl)cysteine is present on C242.

The protein belongs to the HMBS family. As to quaternary structure, monomer. The cofactor is dipyrromethane.

It carries out the reaction 4 porphobilinogen + H2O = hydroxymethylbilane + 4 NH4(+). It participates in porphyrin-containing compound metabolism; protoporphyrin-IX biosynthesis; coproporphyrinogen-III from 5-aminolevulinate: step 2/4. Functionally, tetrapolymerization of the monopyrrole PBG into the hydroxymethylbilane pre-uroporphyrinogen in several discrete steps. The polypeptide is Porphobilinogen deaminase (Actinobacillus succinogenes (strain ATCC 55618 / DSM 22257 / CCUG 43843 / 130Z)).